The chain runs to 241 residues: NAD-dependent protein deacetylase 2 (241 aa).

Residues 1 to 241 (MTGKPLVAIL…ALPALLRGLG (241 aa)) form the Deacetylase sirtuin-type domain. Residues Ala-13, Thr-17, Arg-25, Gln-92, Val-94, Asp-95, and His-112 each coordinate NAD(+). Residues Val-94 and Asp-95 each contribute to the nicotinamide site. The Proton acceptor role is filled by His-112. Zn(2+) contacts are provided by Cys-120, Cys-123, Cys-145, and Cys-148. The NAD(+) site is built by Thr-186, Ser-187, Asn-211, and Ile-229.

This sequence belongs to the sirtuin family. Class U subfamily. The cofactor is Zn(2+).

Its subcellular location is the cytoplasm. The catalysed reaction is N(6)-acetyl-L-lysyl-[protein] + NAD(+) + H2O = 2''-O-acetyl-ADP-D-ribose + nicotinamide + L-lysyl-[protein]. In terms of biological role, NAD-dependent protein deacetylase which modulates the activities of several enzymes which are inactive in their acetylated form. The sequence is that of NAD-dependent protein deacetylase 2 from Streptomyces coelicolor (strain ATCC BAA-471 / A3(2) / M145).